A 345-amino-acid chain; its full sequence is Aspartate--ammonia ligase (345 aa).

Belongs to the class-II aminoacyl-tRNA synthetase family. AsnA subfamily.

The protein resides in the cytoplasm. It carries out the reaction L-aspartate + NH4(+) + ATP = L-asparagine + AMP + diphosphate + H(+). It functions in the pathway amino-acid biosynthesis; L-asparagine biosynthesis; L-asparagine from L-aspartate (ammonia route): step 1/1. This Bacteroides thetaiotaomicron (strain ATCC 29148 / DSM 2079 / JCM 5827 / CCUG 10774 / NCTC 10582 / VPI-5482 / E50) protein is Aspartate--ammonia ligase.